Here is a 629-residue protein sequence, read N- to C-terminus: G1-specific transcription factors activator MSA1 (629 aa).

A compositionally biased stretch (basic residues) spans 1 to 11 (MDKSMIKKRGR). Disordered stretches follow at residues 1–60 (MDKS…KRRL), 83–106 (STPTKKSSTNGSTPISTPSSNDSY), 217–286 (YCDT…SSLQ), 455–485 (VQVQSQSNSPTQRQQQQRQFQIPPPHINMNS), and 586–629 (PNLH…IDDQ). Over residues 21–37 (PLQSPMAHSSMQVQKQG) the composition is skewed to polar residues. Positions 245–260 (IETSASPIGSARNNNI) are enriched in polar residues. 2 stretches are compositionally biased toward low complexity: residues 261–277 (LLSQPPQSPPSSAQLKP) and 455–475 (VQVQSQSNSPTQRQQQQRQFQ). S268 is subject to Phosphoserine. Basic and acidic residues predominate over residues 614-629 (KQDDARTALKRLIDDQ).

In terms of assembly, interacts with transcription complexes SCB-binding factor (SBF) and MCB-binding factor (MBF) at their target promoters. Interacts with MBP1 and SWI6. In terms of processing, phosphorylated by CDC28.

Activator of G1-specific transcription factors, MBF and SBF. Promotes both the timing of G1-specific gene transcription and cell cycle initiation. Associates with SBF- and MBF-regulated target promoters and this binding is maximal during the G1 phase, prior to maximum budding. Affects cell cycle initiation by advancing the timing of transcription of G1-specific genes. Overexpression advances the timing of SBF-dependent transcription and budding. Depletion delays both indicators of cell cycle initiation. This Saccharomyces cerevisiae (strain ATCC 204508 / S288c) (Baker's yeast) protein is G1-specific transcription factors activator MSA1 (MSA1).